A 161-amino-acid chain; its full sequence is 2-C-methyl-D-erythritol 2,4-cyclodiphosphate synthase (161 aa).

A divalent metal cation-binding residues include D8 and H10. 4-CDP-2-C-methyl-D-erythritol 2-phosphate-binding positions include 8–10 (DLH) and 34–35 (HS). H42 lines the a divalent metal cation pocket. 4-CDP-2-C-methyl-D-erythritol 2-phosphate contacts are provided by residues 56 to 58 (DIG) and R142.

Belongs to the IspF family. Homotrimer. A divalent metal cation is required as a cofactor.

It catalyses the reaction 4-CDP-2-C-methyl-D-erythritol 2-phosphate = 2-C-methyl-D-erythritol 2,4-cyclic diphosphate + CMP. It participates in isoprenoid biosynthesis; isopentenyl diphosphate biosynthesis via DXP pathway; isopentenyl diphosphate from 1-deoxy-D-xylulose 5-phosphate: step 4/6. Its function is as follows. Involved in the biosynthesis of isopentenyl diphosphate (IPP) and dimethylallyl diphosphate (DMAPP), two major building blocks of isoprenoid compounds. Catalyzes the conversion of 4-diphosphocytidyl-2-C-methyl-D-erythritol 2-phosphate (CDP-ME2P) to 2-C-methyl-D-erythritol 2,4-cyclodiphosphate (ME-CPP) with a corresponding release of cytidine 5-monophosphate (CMP). The chain is 2-C-methyl-D-erythritol 2,4-cyclodiphosphate synthase from Treponema denticola (strain ATCC 35405 / DSM 14222 / CIP 103919 / JCM 8153 / KCTC 15104).